The primary structure comprises 122 residues: UPF0102 protein VIBHAR_00890 (122 aa).

This sequence belongs to the UPF0102 family.

This chain is UPF0102 protein VIBHAR_00890, found in Vibrio campbellii (strain ATCC BAA-1116).